The following is a 249-amino-acid chain: UDP-2,3-diacylglucosamine hydrolase (249 aa).

Mn(2+) contacts are provided by Asp-7, His-9, Asp-40, Asn-78, and His-113. 78–79 (NR) lines the substrate pocket. Residues Asp-121, Ser-159, Thr-163, Lys-166, and His-194 each contribute to the substrate site. Mn(2+) is bound by residues His-194 and His-196.

This sequence belongs to the LpxH family. Requires Mn(2+) as cofactor.

Its subcellular location is the cell inner membrane. It catalyses the reaction UDP-2-N,3-O-bis[(3R)-3-hydroxytetradecanoyl]-alpha-D-glucosamine + H2O = 2-N,3-O-bis[(3R)-3-hydroxytetradecanoyl]-alpha-D-glucosaminyl 1-phosphate + UMP + 2 H(+). The protein operates within glycolipid biosynthesis; lipid IV(A) biosynthesis; lipid IV(A) from (3R)-3-hydroxytetradecanoyl-[acyl-carrier-protein] and UDP-N-acetyl-alpha-D-glucosamine: step 4/6. In terms of biological role, hydrolyzes the pyrophosphate bond of UDP-2,3-diacylglucosamine to yield 2,3-diacylglucosamine 1-phosphate (lipid X) and UMP by catalyzing the attack of water at the alpha-P atom. Involved in the biosynthesis of lipid A, a phosphorylated glycolipid that anchors the lipopolysaccharide to the outer membrane of the cell. This chain is UDP-2,3-diacylglucosamine hydrolase, found in Pseudomonas fluorescens (strain SBW25).